We begin with the raw amino-acid sequence, 58 residues long: UPF0391 membrane protein Gbem_0127 (58 aa).

Helical transmembrane passes span 4 to 24 and 33 to 53; these read WALI…GGIA and ILFY…LLAG.

It belongs to the UPF0391 family.

The protein localises to the cell membrane. This is UPF0391 membrane protein Gbem_0127 from Citrifermentans bemidjiense (strain ATCC BAA-1014 / DSM 16622 / JCM 12645 / Bem) (Geobacter bemidjiensis).